Here is an 840-residue protein sequence, read N- to C-terminus: Kinesin-like protein KIN-14J (840 aa).

The tract at residues 1–74 is disordered; that stretch reads MEADPAPSST…KGEEPVVSAE (74 aa). The Kinesin motor domain occupies 177 to 501; sequence NIRVFCRCRP…LNFASRVRAI (325 aa). 260-267 provides a ligand contact to ATP; sequence GQTGTGKT. Residues 517-594 adopt a coiled-coil conformation; sequence KLKQMTEKIR…KKAARDTARS (78 aa). Residues 581–593 show a composition bias toward basic and acidic residues; the sequence is LANEKKAARDTAR. The tract at residues 581 to 617 is disordered; that stretch reads LANEKKAARDTARSTKPPLAPMRQRPPLGRIGNHIPP.

This sequence belongs to the TRAFAC class myosin-kinesin ATPase superfamily. Kinesin family. KIN-14 subfamily.

In Oryza sativa subsp. japonica (Rice), this protein is Kinesin-like protein KIN-14J.